A 561-amino-acid polypeptide reads, in one-letter code: Urocanate hydratase (561 aa).

NAD(+) is bound by residues 52 to 53, Q130, 176 to 178, E196, R201, 242 to 243, 263 to 267, 273 to 274, and Y322; these read GG, GMG, NA, QTSAH, and YL. The active site involves C410. G492 contacts NAD(+).

Belongs to the urocanase family. Requires NAD(+) as cofactor.

The protein localises to the cytoplasm. It carries out the reaction 4-imidazolone-5-propanoate = trans-urocanate + H2O. Its pathway is amino-acid degradation; L-histidine degradation into L-glutamate; N-formimidoyl-L-glutamate from L-histidine: step 2/3. Functionally, catalyzes the conversion of urocanate to 4-imidazolone-5-propionate. This Citrobacter koseri (strain ATCC BAA-895 / CDC 4225-83 / SGSC4696) protein is Urocanate hydratase.